The following is a 383-amino-acid chain: Acetylornithine deacetylase (383 aa).

Residue H80 coordinates Zn(2+). D82 is an active-site residue. D112 is a Zn(2+) binding site. Residue E144 is part of the active site. 3 residues coordinate Zn(2+): E145, E169, and H355.

This sequence belongs to the peptidase M20A family. ArgE subfamily. As to quaternary structure, homodimer. Zn(2+) serves as cofactor. Requires Co(2+) as cofactor. The cofactor is glutathione.

The protein resides in the cytoplasm. It catalyses the reaction N(2)-acetyl-L-ornithine + H2O = L-ornithine + acetate. The protein operates within amino-acid biosynthesis; L-arginine biosynthesis; L-ornithine from N(2)-acetyl-L-ornithine (linear): step 1/1. In terms of biological role, catalyzes the hydrolysis of the amide bond of N(2)-acetylated L-amino acids. Cleaves the acetyl group from N-acetyl-L-ornithine to form L-ornithine, an intermediate in L-arginine biosynthesis pathway, and a branchpoint in the synthesis of polyamines. The chain is Acetylornithine deacetylase from Shigella boydii serotype 4 (strain Sb227).